We begin with the raw amino-acid sequence, 138 residues long: rRNA methyltransferase 1, mitochondrial (138 aa).

Residues 1–21 (MNNQPCSIVWRRFLTSKVKPA) constitute a mitochondrion transit peptide. Positions 92–113 (KQDILSSKRQQEEHKSKYSRKS) are disordered.

Belongs to the class IV-like SAM-binding methyltransferase superfamily. RNA methyltransferase TrmH family.

The protein localises to the mitochondrion. The catalysed reaction is a guanosine in 21S rRNA + S-adenosyl-L-methionine = a 2'-O-methylguanosine in 21S rRNA + S-adenosyl-L-homocysteine + H(+). S-adenosyl-L-methionine-dependent 2'-O-ribose methyltransferase that catalyzes the formation of the 2'-O-methylguanosine corresponding to position 2270 in S.cerevisiae 21S mitochondrial large ribosomal RNA, a universally conserved modification in the peptidyl transferase domain of the 21S rRNA. The sequence is that of rRNA methyltransferase 1, mitochondrial from Lachancea kluyveri (strain ATCC 58438 / CBS 3082 / BCRC 21498 / NBRC 1685 / JCM 7257 / NCYC 543 / NRRL Y-12651) (Yeast).